The sequence spans 310 residues: Porphobilinogen deaminase (310 aa).

S-(dipyrrolylmethanemethyl)cysteine is present on Cys242.

The protein belongs to the HMBS family. As to quaternary structure, monomer. Requires dipyrromethane as cofactor.

It carries out the reaction 4 porphobilinogen + H2O = hydroxymethylbilane + 4 NH4(+). It participates in porphyrin-containing compound metabolism; protoporphyrin-IX biosynthesis; coproporphyrinogen-III from 5-aminolevulinate: step 2/4. Tetrapolymerization of the monopyrrole PBG into the hydroxymethylbilane pre-uroporphyrinogen in several discrete steps. This is Porphobilinogen deaminase from Shewanella baltica (strain OS155 / ATCC BAA-1091).